A 247-amino-acid polypeptide reads, in one-letter code: DNA polymerase sliding clamp (247 aa).

This sequence belongs to the PCNA family. In terms of assembly, homotrimer. The subunits circularize to form a toroid; DNA passes through its center. Replication factor C (RFC) is required to load the toroid on the DNA.

Sliding clamp subunit that acts as a moving platform for DNA processing. Responsible for tethering the catalytic subunit of DNA polymerase and other proteins to DNA during high-speed replication. The chain is DNA polymerase sliding clamp from Thermofilum pendens (strain DSM 2475 / Hrk 5).